The chain runs to 413 residues: MREAPPFDKALGMYYYVTDTCPSGGVIKKSPEDFVVEEVLADGTVVAVGGVELRPRVGGWTWIHVVKRNVDTIRLMIRLAKALGVSPREVSVGGIKDTRAVASHIISVRGAVKGLPEIPGVKFLGMWSMDRPMSPSEIYGNRFTIVLRDVERVDCAVEALEALKSAAVPNYYGYQRFGTIRPVSHLLGRALLRKSPEEFFDAMFCKIFEHESAAAKKARELACRGEYQKALETFPRRFVEERAFLRRLAQGYDMWNAIMGIPLQILRIYVEAAQSYLFNRFLSARLELGPLDKPLEGDLVEVGGQVAYYAEGLGGDVVLPVAGAGVRMPRGKVGEALLKVMKEEGVDPAAFLKMPRGLKAYGSYRRARLEVGDFSYAVRGRDVELRFVLPRGSYATVLLREAVKPAEPYRHGF.

Asp97 acts as the Nucleophile in catalysis. The 204-residue stretch at Ala167 to Glu370 folds into the TRUD domain.

It belongs to the pseudouridine synthase TruD family.

The enzyme catalyses uridine(13) in tRNA = pseudouridine(13) in tRNA. In terms of biological role, could be responsible for synthesis of pseudouridine from uracil-13 in transfer RNAs. The sequence is that of Probable tRNA pseudouridine synthase D from Pyrobaculum arsenaticum (strain DSM 13514 / JCM 11321 / PZ6).